The chain runs to 100 residues: Large ribosomal subunit protein bL21 (100 aa).

Belongs to the bacterial ribosomal protein bL21 family. Part of the 50S ribosomal subunit. Contacts protein L20.

This protein binds to 23S rRNA in the presence of protein L20. This chain is Large ribosomal subunit protein bL21, found in Wolbachia pipientis wMel.